We begin with the raw amino-acid sequence, 101 residues long: Small ribosomal subunit protein uS14m (101 aa).

This sequence belongs to the universal ribosomal protein uS14 family. In terms of assembly, component of the mitochondrial ribosome small subunit (28S) which comprises a 12S rRNA and about 30 distinct proteins. Interacts with LIAT1.

Its subcellular location is the mitochondrion. The sequence is that of Small ribosomal subunit protein uS14m (mrps14) from Dictyostelium discoideum (Social amoeba).